Reading from the N-terminus, the 163-residue chain is Neurotrophin-3 (163 aa).

An N-terminal signal peptide occupies residues 1 to 3; the sequence is IQS. The propeptide occupies 4 to 119; that stretch reads TSMDQGILTE…ALNRTSRRKR (116 aa). 2 disordered regions span residues 38–60 and 90–131; these read ARTKDGTQTTVKKSEAEADATAS and LLSE…YSVC. A glycan (N-linked (GlcNAc...) asparagine) is linked at N112.

The protein belongs to the NGF-beta family.

It localises to the secreted. Seems to promote the survival of visceral and proprioceptive sensory neurons. The polypeptide is Neurotrophin-3 (NTF3) (Eunectes notaeus (Yellow anaconda)).